The chain runs to 693 residues: Periplasmic alpha-galactoside-binding protein (693 aa).

Residues 1–20 (MKTHRLNMTASLLIGISAFA) form the signal peptide.

This sequence belongs to the bacterial solute-binding protein 5 family.

It is found in the periplasm. Involved in the transport of alpha-galactosides. Required for the utilization of raffinose and melibiose. Probably acts as a periplasmic substrate-binding protein for a transport system. The chain is Periplasmic alpha-galactoside-binding protein from Rhizobium meliloti (strain 1021) (Ensifer meliloti).